Reading from the N-terminus, the 371-residue chain is Ferrochelatase (371 aa).

H218 and E299 together coordinate Fe cation.

It belongs to the ferrochelatase family.

The protein resides in the cytoplasm. It catalyses the reaction heme b + 2 H(+) = protoporphyrin IX + Fe(2+). It functions in the pathway porphyrin-containing compound metabolism; protoheme biosynthesis; protoheme from protoporphyrin-IX: step 1/1. Catalyzes the ferrous insertion into protoporphyrin IX. The chain is Ferrochelatase from Cupriavidus necator (strain ATCC 17699 / DSM 428 / KCTC 22496 / NCIMB 10442 / H16 / Stanier 337) (Ralstonia eutropha).